The sequence spans 96 residues: UPF0235 protein YggU (96 aa).

It belongs to the UPF0235 family.

In Shigella flexneri, this protein is UPF0235 protein YggU.